Reading from the N-terminus, the 646-residue chain is Lipoteichoic acid synthase (646 aa).

At 1 to 7 (MKLHKKK) the chain is on the cytoplasmic side. Residues 8–28 (LTLFAFFILTVLTVTLKTYFS) traverse the membrane as a helical segment. Topologically, residues 29–43 (YYVDFSLGVKGLVQN) are extracellular. The helical transmembrane segment at 44 to 64 (LILLMNPYSLIALVLSIFLFF) threads the bilayer. Topologically, residues 65-68 (KGKK) are cytoplasmic. Residues 69 to 89 (AFWFIFIGGFILTFLLYANVV) form a helical membrane-spanning segment. The Extracellular segment spans residues 90–119 (YFRFFSDFLTFSTLNQAGNVESMGGAVTAS). A helical transmembrane segment spans residues 120-140 (FKWYDFVYFIDTIIYLFVLIF). Residues 141–153 (KQKWLDKRVFSKK) are Cytoplasmic-facing. A helical membrane pass occupies residues 154–174 (FVPVVMAASIALFFLNLAFAE). The Extracellular portion of the chain corresponds to 175 to 646 (SDRPELLTRT…KTGPKGQERK (472 aa)). Mn(2+) is bound by residues Glu-255 and Thr-300. Thr-300 is a catalytic residue. His-416 lines the substrate pocket. Mn(2+)-binding residues include Asp-475 and His-476. Positions 579-646 (IYDNKNNEPM…KTGPKGQERK (68 aa)) are disordered. 2 stretches are compositionally biased toward basic and acidic residues: residues 580–607 (YDNK…KDLQ) and 625–646 (DFDK…QERK).

This sequence belongs to the LTA synthase family. Post-translationally, proteolytically cleaved.

Its subcellular location is the cell membrane. The protein resides in the secreted. The protein operates within cell wall biogenesis; lipoteichoic acid biosynthesis. In terms of biological role, catalyzes the polymerization of lipoteichoic acid (LTA) polyglycerol phosphate, a reaction that presumably uses phosphatidylglycerol (PG) as substrate. Is required for staphylococcal growth and cell division process. The polypeptide is Lipoteichoic acid synthase (ltaS) (Staphylococcus saprophyticus subsp. saprophyticus (strain ATCC 15305 / DSM 20229 / NCIMB 8711 / NCTC 7292 / S-41)).